The sequence spans 356 residues: Nucleotide-binding protein GDI1189/Gdia_1902 (356 aa).

20–27 contacts ATP; the sequence is GLSGAGKS. Residue 65–68 coordinates GTP; it reads DSRT. Positions 285-313 are disordered; that stretch reads EPGGTCDSPGKPAHIEKGAAPTDVQSGGA.

Belongs to the RapZ-like family.

Displays ATPase and GTPase activities. The sequence is that of Nucleotide-binding protein GDI1189/Gdia_1902 from Gluconacetobacter diazotrophicus (strain ATCC 49037 / DSM 5601 / CCUG 37298 / CIP 103539 / LMG 7603 / PAl5).